The following is a 203-amino-acid chain: Outer-membrane lipoprotein LolB (203 aa).

The N-terminal stretch at 1–21 (MTGRWSPRLLAGLLAALVLSG) is a signal peptide. C22 carries N-palmitoyl cysteine lipidation. C22 carries S-diacylglycerol cysteine lipidation.

The protein belongs to the LolB family. Monomer.

Its subcellular location is the cell outer membrane. Plays a critical role in the incorporation of lipoproteins in the outer membrane after they are released by the LolA protein. The sequence is that of Outer-membrane lipoprotein LolB from Halorhodospira halophila (strain DSM 244 / SL1) (Ectothiorhodospira halophila (strain DSM 244 / SL1)).